Here is a 358-residue protein sequence, read N- to C-terminus: MADRGGARRPRGDQEPLGPRLRAPRSARETRQSESRAERGLPPSQRSSVRSAASGHDRSTRGAASGACKPRVKKKVRPRSSQSEKVAHSKELTRSKKLTRSKKVTGTQEATQVEEVTTIEEATQTEEITVAEEVTQTENMAQTEEMVQTEEMEPPTLSVVVTHSNERYDLLVTPQQGNSEPIVQDLAQLVEEATGVPLPFQKLIFKGKSLKEMETPLSALGMQNGCRVMLIGEKSNPEEEAELKKLKDLEVSVEKTANHLEELNKELSDIQQGFLAKELQAEALCRLDRKIKATIEQFMKILEEIDTMVLPENFKDSRLKRKNLVKKVQVFLAECDTVEQYICQETERLQSTNLALPE.

Composition is skewed to basic and acidic residues over residues M1–Q14, S26–R39, and K85–R94. Residues M1 to V113 are disordered. Tandem repeats lie at residues K102–T111, E114–I119, E120–T125, E126–A131, E132–T137, E144–T149, and E150–P155. The tract at residues E114–E212 is 7 X 6 AA tandem repeat of E-E-X(4). The 81-residue stretch at L157–P237 folds into the Ubiquitin-like domain. The interval D185 to G232 is interaction with HSPA8. The tract at residues M229–E358 is interaction with PPP1R15A. Residues H259–E339 form the BAG domain.

Homodimer. Forms a heteromeric complex with HSP70/HSC70. Binds to the ATPase domain of HSP/HSC70 chaperones. Interacts with NR3C1. Interacts with the N-terminal region of MAPRE2. Interacts with PPP1R15A. Interacts with BCL2 in an ATP-dependent manner. Interacts with SIAH1, SIAH2, HSPA8 (via NBD), HSPA1A (via NBD) and HSPA1B (via NBD). Interacts with ESR1; the interaction is promoted in the absence of estradiol (17-beta-estradiol/E2). In terms of processing, ubiquitinated; mediated by SIAH1 or SIAH2 and leading to its subsequent proteasomal degradation. Expressed in the CA1 region of the hippocampus (at protein level). Expressed in the uterus (at protein level).

It is found in the nucleus. It localises to the cytoplasm. Co-chaperone for HSP70 and HSC70 chaperone proteins. Acts as a nucleotide-exchange factor (NEF) promoting the release of ADP from the HSP70 and HSC70 proteins thereby triggering client/substrate protein release. Nucleotide release is mediated via its binding to the nucleotide-binding domain (NBD) of HSPA8/HSC70 where as the substrate release is mediated via its binding to the substrate-binding domain (SBD) of HSPA8/HSC70. Inhibits the pro-apoptotic function of PPP1R15A, and has anti-apoptotic activity. Markedly increases the anti-cell death function of BCL2 induced by various stimuli. Involved in the STUB1-mediated proteasomal degradation of ESR1 in response to age-related circulating estradiol (17-beta-estradiol/E2) decline, thereby promotes neuronal apoptosis in response to ischemic reperfusion injury. The protein is BAG family molecular chaperone regulator 1 (Bag1) of Rattus norvegicus (Rat).